A 452-amino-acid polypeptide reads, in one-letter code: Phosphoglucosamine mutase (452 aa).

S104 (phosphoserine intermediate) is an active-site residue. 4 residues coordinate Mg(2+): S104, D241, D243, and D245. The residue at position 104 (S104) is a Phosphoserine.

It belongs to the phosphohexose mutase family. The cofactor is Mg(2+). Post-translationally, activated by phosphorylation.

The catalysed reaction is alpha-D-glucosamine 1-phosphate = D-glucosamine 6-phosphate. Functionally, catalyzes the conversion of glucosamine-6-phosphate to glucosamine-1-phosphate. The polypeptide is Phosphoglucosamine mutase (Arthrobacter sp. (strain FB24)).